A 410-amino-acid polypeptide reads, in one-letter code: Protein BTN2 (410 aa).

Disordered stretches follow at residues 223-264 and 276-410; these read INEP…TKED and MQEE…IEEI. 2 stretches are compositionally biased toward basic and acidic residues: residues 233 to 264 and 276 to 311; these read SKIDESHDDVNMSESLKEEEAEKAKEPLTKED and MQEESRKSEQEKAAKEDEERQKKEKEARLKARKESL. Residues 243-330 are a coiled coil; the sequence is NMSESLKEEE…QQKKLQNSKS (88 aa). A compositionally biased stretch (low complexity) spans 334 to 362; it reads SEIEASNKNNNSNSGSAESDNESINSDSD. Residues 364–373 show a composition bias toward polar residues; it reads TLDFSVSGNT.

In terms of assembly, interacts with RHB1, IST2, TDA3 and YIF1.

It localises to the cytoplasm. Its subcellular location is the late endosome. In terms of biological role, V-SNARE binding protein that facilitates specific protein retrieval from a late endosome to the Golgi. Modulates the rate of arginine uptake. Involved in pH homeostasis. Required for the correct localization of IST2. May be involved in ion homeostasis together with IST2. This Saccharomyces cerevisiae (strain ATCC 204508 / S288c) (Baker's yeast) protein is Protein BTN2 (BTN2).